Consider the following 298-residue polypeptide: Acetylglutamate kinase (298 aa).

Residues glycine 69–glycine 70, arginine 91, and asparagine 196 contribute to the substrate site.

Belongs to the acetylglutamate kinase family. ArgB subfamily.

It is found in the cytoplasm. It carries out the reaction N-acetyl-L-glutamate + ATP = N-acetyl-L-glutamyl 5-phosphate + ADP. Its pathway is amino-acid biosynthesis; L-arginine biosynthesis; N(2)-acetyl-L-ornithine from L-glutamate: step 2/4. In terms of biological role, catalyzes the ATP-dependent phosphorylation of N-acetyl-L-glutamate. The sequence is that of Acetylglutamate kinase from Granulibacter bethesdensis (strain ATCC BAA-1260 / CGDNIH1).